A 511-amino-acid polypeptide reads, in one-letter code: Trigger factor (511 aa).

The 86-residue stretch at 168-253 (GDLLTIDFVG…VKEVKAPAEV (86 aa)) folds into the PPIase FKBP-type domain. The tract at residues 446 to 511 (DEHEHHHHDH…KAPAKKKKED (66 aa)) is disordered. A compositionally biased stretch (basic and acidic residues) spans 455-478 (HDHDHDHDHDHDHGHDHDHGDEKP). Positions 479-488 (KKKPAAKKAA) are enriched in basic residues. Over residues 489 to 498 (AKSDDGEAKP) the composition is skewed to basic and acidic residues. Over residues 499–511 (AAKKAPAKKKKED) the composition is skewed to basic residues.

The protein belongs to the FKBP-type PPIase family. Tig subfamily.

Its subcellular location is the cytoplasm. The enzyme catalyses [protein]-peptidylproline (omega=180) = [protein]-peptidylproline (omega=0). Functionally, involved in protein export. Acts as a chaperone by maintaining the newly synthesized protein in an open conformation. Functions as a peptidyl-prolyl cis-trans isomerase. This chain is Trigger factor, found in Parvibaculum lavamentivorans (strain DS-1 / DSM 13023 / NCIMB 13966).